A 304-amino-acid polypeptide reads, in one-letter code: UDP-3-O-acyl-N-acetylglucosamine deacetylase (304 aa).

The Zn(2+) site is built by His-79, His-238, and Asp-242. His-265 serves as the catalytic Proton donor.

The protein belongs to the LpxC family. Zn(2+) is required as a cofactor.

It catalyses the reaction a UDP-3-O-[(3R)-3-hydroxyacyl]-N-acetyl-alpha-D-glucosamine + H2O = a UDP-3-O-[(3R)-3-hydroxyacyl]-alpha-D-glucosamine + acetate. It participates in glycolipid biosynthesis; lipid IV(A) biosynthesis; lipid IV(A) from (3R)-3-hydroxytetradecanoyl-[acyl-carrier-protein] and UDP-N-acetyl-alpha-D-glucosamine: step 2/6. Catalyzes the hydrolysis of UDP-3-O-myristoyl-N-acetylglucosamine to form UDP-3-O-myristoylglucosamine and acetate, the committed step in lipid A biosynthesis. The sequence is that of UDP-3-O-acyl-N-acetylglucosamine deacetylase from Photobacterium profundum (strain SS9).